A 357-amino-acid chain; its full sequence is tRNA-specific 2-thiouridylase MnmA (357 aa).

ATP is bound by residues 7-14 and Leu-33; that span reads GLSGGVDS. Residue Cys-94 is the Nucleophile of the active site. Residues Cys-94 and Cys-193 are joined by a disulfide bond. Gly-119 contributes to the ATP binding site. The tract at residues 143-145 is interaction with tRNA; that stretch reads KDQ. Residue Cys-193 is the Cysteine persulfide intermediate of the active site. The interaction with tRNA stretch occupies residues 298–299; it reads RY.

This sequence belongs to the MnmA/TRMU family.

It is found in the cytoplasm. The catalysed reaction is S-sulfanyl-L-cysteinyl-[protein] + uridine(34) in tRNA + AH2 + ATP = 2-thiouridine(34) in tRNA + L-cysteinyl-[protein] + A + AMP + diphosphate + H(+). Functionally, catalyzes the 2-thiolation of uridine at the wobble position (U34) of tRNA, leading to the formation of s(2)U34. This Synechococcus sp. (strain ATCC 27144 / PCC 6301 / SAUG 1402/1) (Anacystis nidulans) protein is tRNA-specific 2-thiouridylase MnmA.